The following is a 420-amino-acid chain: 3-isopropylmalate dehydratase large subunit (420 aa).

C301, C361, and C364 together coordinate [4Fe-4S] cluster.

It belongs to the aconitase/IPM isomerase family. LeuC type 2 subfamily. As to quaternary structure, heterodimer of LeuC and LeuD. It depends on [4Fe-4S] cluster as a cofactor.

The enzyme catalyses (2R,3S)-3-isopropylmalate = (2S)-2-isopropylmalate. It participates in amino-acid biosynthesis; L-leucine biosynthesis; L-leucine from 3-methyl-2-oxobutanoate: step 2/4. Functionally, catalyzes the isomerization between 2-isopropylmalate and 3-isopropylmalate, via the formation of 2-isopropylmaleate. This Desulfovibrio desulfuricans (strain ATCC 27774 / DSM 6949 / MB) protein is 3-isopropylmalate dehydratase large subunit.